Consider the following 210-residue polypeptide: Tetraspanin-31 (210 aa).

At Met1–Ala12 the chain is on the cytoplasmic side. Residues Leu13 to Trp33 traverse the membrane as a helical segment. The Extracellular portion of the chain corresponds to Gly34–His44. The helical transmembrane segment at Ile45–Val65 threads the bilayer. The Cytoplasmic portion of the chain corresponds to Gly66–Gln72. The chain crosses the membrane as a helical span at residues Val73–Ser93. The Extracellular segment spans residues Cys94–Lys173. Asn109, Asn117, and Asn134 each carry an N-linked (GlcNAc...) asparagine glycan. Residues Ile174 to Met194 form a helical membrane-spanning segment. At Arg195 to Leu210 the chain is on the cytoplasmic side.

Belongs to the tetraspanin (TM4SF) family.

It localises to the membrane. In Mus musculus (Mouse), this protein is Tetraspanin-31 (Tspan31).